The chain runs to 466 residues: Phytase A (466 aa).

The N-terminal stretch at 1-19 is a signal peptide; that stretch reads MGFLAIVLSVALLFRSTSG. C31 and C40 form a disulfide bridge. 1D-myo-inositol hexakisphosphate contacts are provided by Y51, R81, H82, R85, and T88. Intrachain disulfides connect C71–C414, C215–C465, C264–C282, and C436–C444. Residue H82 is the Nucleophile of the active site. N120 carries N-linked (GlcNAc...) asparagine glycosylation. Residue R165 coordinates 1D-myo-inositol hexakisphosphate. 2 N-linked (GlcNAc...) asparagine glycosylation sites follow: N207 and N230. 1D-myo-inositol hexakisphosphate is bound at residue K301. Residues N339 and N352 are each glycosylated (N-linked (GlcNAc...) asparagine). Residues H361 and D362 each contribute to the 1D-myo-inositol hexakisphosphate site. Residue N376 is glycosylated (N-linked (GlcNAc...) asparagine).

Belongs to the histidine acid phosphatase family. Monomer.

The protein localises to the secreted. It catalyses the reaction 1D-myo-inositol hexakisphosphate + H2O = 1D-myo-inositol 1,2,4,5,6-pentakisphosphate + phosphate. It carries out the reaction 1D-myo-inositol 1,2,4,5,6-pentakisphosphate + H2O = 1D-myo-inositol 1,2,5,6-tetrakisphosphate + phosphate. The enzyme catalyses 1D-myo-inositol 1,2,5,6-tetrakisphosphate + H2O = 1D-myo-inositol 1,2,6-trisphosphate + phosphate. The catalysed reaction is 1D-myo-inositol 1,2,6-trisphosphate + H2O = 1D-myo-inositol 1,2-bisphosphate + phosphate. It catalyses the reaction 1D-myo-inositol 1,2-bisphosphate + H2O = 1D-myo-inositol 2-phosphate + phosphate. In terms of biological role, catalyzes the phosphate monoester hydrolysis of phytic acid (myo-inositol hexakisphosphate), which results in the stepwise formation of myo-inositol pentakis-, tetrakis-, tris-, bis-, and monophosphates, as well as the liberation of inorganic phosphate. Myo-inositol 2-monophosphate is the end product. Has a broad substrate specificity and is also able to dephosphorylate other classic acid phosphatase substrates such as p-nitrophenyl phosphate, phenyl phosphate, fructose 1,6-bisphosphate, glucose 6-phosphate, 3-phosphoglycerate, as well as ADP and ATP. In Aspergillus terreus, this protein is Phytase A.